A 152-amino-acid chain; its full sequence is 3-dehydroquinate dehydratase (152 aa).

Residue Y25 is the Proton acceptor of the active site. Substrate contacts are provided by N76, H82, and D89. H102 (proton donor) is an active-site residue. Substrate-binding positions include 103 to 104 and R113; that span reads LS.

It belongs to the type-II 3-dehydroquinase family. In terms of assembly, homododecamer.

The catalysed reaction is 3-dehydroquinate = 3-dehydroshikimate + H2O. It functions in the pathway metabolic intermediate biosynthesis; chorismate biosynthesis; chorismate from D-erythrose 4-phosphate and phosphoenolpyruvate: step 3/7. Catalyzes a trans-dehydration via an enolate intermediate. The sequence is that of 3-dehydroquinate dehydratase from Gloeothece citriformis (strain PCC 7424) (Cyanothece sp. (strain PCC 7424)).